Reading from the N-terminus, the 245-residue chain is MHNYKLTIQYDGARFKGWQRLGNNDNTIQGKIESVISEMVGKEIEIIGCSRTDAGVHALNQVANFQSDEKLVEHKVKKYLNQYLPNDISITNVEEVHDRFHARYNSKAKTYLYKIWNEEHTNPFMRKYSMHVNKKLNVKSMKAAAKHLVGSHDFTAFSNAKSKKKSMVREVYTLDVMEEAGFVQIRVSGNGFLHNMVRKIVGALIEVGLGQLDAEAIPNILEEKQRNQINCLAEASGLYLENVEF.

Residue aspartate 53 is the Nucleophile of the active site. Substrate is bound at residue tyrosine 111.

This sequence belongs to the tRNA pseudouridine synthase TruA family. Homodimer.

It catalyses the reaction uridine(38/39/40) in tRNA = pseudouridine(38/39/40) in tRNA. In terms of biological role, formation of pseudouridine at positions 38, 39 and 40 in the anticodon stem and loop of transfer RNAs. In Bacillus cereus (strain ATCC 14579 / DSM 31 / CCUG 7414 / JCM 2152 / NBRC 15305 / NCIMB 9373 / NCTC 2599 / NRRL B-3711), this protein is tRNA pseudouridine synthase A 2.